Here is a 486-residue protein sequence, read N- to C-terminus: Deleted in azoospermia protein 3 (486 aa).

The span at 1 to 10 (MSAANPETPN) shows a compositional bias: polar residues. Residues 1-27 (MSAANPETPNSTISREASTQSSSAAAS) are disordered. Over residues 11 to 27 (STISREASTQSSSAAAS) the composition is skewed to low complexity. The RRM domain maps to 40-115 (NTVFVGGIDA…KKLKLGPAIR (76 aa)). 12 consecutive DAZ domains span residues 167–190 (AYSA…YNYQ), 191–214 (EYPT…YNYQ), 215–238 (PFPA…YNYQ), 239–262 (AFPA…YNYQ), 263–286 (PFPA…YNYQ), 287–310 (AFPA…YNYQ), 311–334 (AFPA…YNYQ), 335–358 (AFPA…YNYQ), 359–382 (AFPA…YNYQ), 383–406 (AFPA…YNYQ), 407–430 (AFPA…YNYQ), and 431–454 (AFPA…YNYQ).

This sequence belongs to the RRM DAZ family. As to quaternary structure, forms a heterodimer with BOLL and DAZL. Interacts with PUM2, DAZAP1, DAZAP2, DZIP1 and DZIP3. In terms of tissue distribution, testis specific.

Its subcellular location is the cytoplasm. It is found in the nucleus. Functionally, RNA-binding protein that plays an essential role in spermatogenesis. May act by binding to the 3'-UTR of mRNAs and regulating their translation. This Homo sapiens (Human) protein is Deleted in azoospermia protein 3 (DAZ3).